The following is a 624-amino-acid chain: Pentatricopeptide repeat-containing protein At2g32630 (624 aa).

13 PPR repeats span residues 153–187 (FEKF…GLSI), 188–222 (DERS…GVKI), 223–257 (TVYS…GIKP), 258–292 (EAYT…GVVY), 293–327 (NKVT…GIES), 328–362 (DVHV…GLSP), 363–397 (SSYT…GVNI), 398–432 (TQVV…GFQA), 433–467 (DVFT…GVKL), 468–502 (STVS…GVQP), 503–537 (NAIT…GMDP), 538–572 (DSYT…GLDQ), and 573–607 (NSVT…GYTI).

The protein belongs to the PPR family. P subfamily.

In Arabidopsis thaliana (Mouse-ear cress), this protein is Pentatricopeptide repeat-containing protein At2g32630.